The sequence spans 273 residues: Putative phosphoenolpyruvate synthase regulatory protein (273 aa).

154–161 provides a ligand contact to ADP; the sequence is GVSRSGKT.

It belongs to the pyruvate, phosphate/water dikinase regulatory protein family. PSRP subfamily.

It carries out the reaction [pyruvate, water dikinase] + ADP = [pyruvate, water dikinase]-phosphate + AMP + H(+). The enzyme catalyses [pyruvate, water dikinase]-phosphate + phosphate + H(+) = [pyruvate, water dikinase] + diphosphate. Its function is as follows. Bifunctional serine/threonine kinase and phosphorylase involved in the regulation of the phosphoenolpyruvate synthase (PEPS) by catalyzing its phosphorylation/dephosphorylation. The protein is Putative phosphoenolpyruvate synthase regulatory protein of Neisseria meningitidis serogroup B (strain ATCC BAA-335 / MC58).